An 877-amino-acid polypeptide reads, in one-letter code: Protein P (877 aa).

Positions 1-183 are terminal protein domain (TP); it reads MHPFSQLFRN…GKPYSWGHRQ (183 aa). Positions 184–382 are spacer; it reads LEQHNGQQHE…YCLHHIVSSL (199 aa). The span at 185–198 shows a compositional bias: basic and acidic residues; that stretch reads EQHNGQQHESHLQS. The segment at 185 to 347 is disordered; it reads EQHNGQQHES…PSSSGLCGGT (163 aa). The segment covering 233–242 has biased composition (polar residues); sequence FGESQKSART. Residues 267–281 show a composition bias toward low complexity; sequence QQGSSQVSSPRSKSS. Polar residues-rich tracts occupy residues 282-302 and 338-347; these read NFRN…PTWY and PSSSGLCGGT. Residues 383–723 form a polymerase/reverse transcriptase domain (RT) region; it reads EDWGPCTISG…YAELWPVARQ (341 aa). The Reverse transcriptase domain maps to 393–634; it reads DVTIRSPRTP…HHLHFMGYVI (242 aa). Residues D465, D585, and D586 each contribute to the Mg(2+) site.

The protein belongs to the hepadnaviridae P protein family.

It carries out the reaction DNA(n) + a 2'-deoxyribonucleoside 5'-triphosphate = DNA(n+1) + diphosphate. It catalyses the reaction Endonucleolytic cleavage to 5'-phosphomonoester.. Activated by host HSP70 and HSP40 in vitro to be able to bind the epsilon loop of the pgRNA. Because deletion of the RNase H region renders the protein partly chaperone-independent, the chaperones may be needed indirectly to relieve occlusion of the RNA-binding site by this domain. Inhibited by several reverse-transcriptase inhibitors: Lamivudine, Adefovir and Entecavir. Its function is as follows. Multifunctional enzyme that converts the viral RNA genome into dsDNA in viral cytoplasmic capsids. This enzyme displays a DNA polymerase activity that can copy either DNA or RNA templates, and a ribonuclease H (RNase H) activity that cleaves the RNA strand of RNA-DNA heteroduplexes in a partially processive 3'- to 5'-endonucleasic mode. Neo-synthesized pregenomic RNA (pgRNA) are encapsidated together with the P protein, and reverse-transcribed inside the nucleocapsid. Initiation of reverse-transcription occurs first by binding the epsilon loop on the pgRNA genome, and is initiated by protein priming, thereby the 5'-end of (-)DNA is covalently linked to P protein. Partial (+)DNA is synthesized from the (-)DNA template and generates the relaxed circular DNA (RC-DNA) genome. After budding and infection, the RC-DNA migrates in the nucleus, and is converted into a plasmid-like covalently closed circular DNA (cccDNA). The activity of P protein does not seem to be necessary for cccDNA generation, and is presumably released from (+)DNA by host nuclear DNA repair machinery. This is Protein P from Arctic squirrel hepatitis virus (ASHV).